A 952-amino-acid chain; its full sequence is Lysosomal alpha-glucosidase (952 aa).

The signal sequence occupies residues methionine 1–leucine 27. Positions glycine 28–glutamine 69 are excised as a propeptide. The disordered stretch occupies residues proline 47–cysteine 82. Residues threonine 80–proline 131 enclose the P-type domain. 3 disulfide bridges follow: cysteine 82–cysteine 109, cysteine 92–cysteine 108, and cysteine 103–cysteine 127. N-linked (GlcNAc...) asparagine glycans are attached at residues asparagine 140, asparagine 233, and asparagine 390. Aspartate 404 lines the substrate pocket. Asparagine 470 carries an N-linked (GlcNAc...) asparagine glycan. The Nucleophile role is filled by aspartate 518. Residue glutamate 521 is part of the active site. Cysteine 533 and cysteine 558 are oxidised to a cystine. Substrate contacts are provided by arginine 600 and aspartate 616. Cysteine 647 and cysteine 658 are disulfide-bonded. An N-linked (GlcNAc...) asparagine glycan is attached at asparagine 652. Histidine 674 is a substrate binding site. Residues asparagine 882 and asparagine 925 are each glycosylated (N-linked (GlcNAc...) asparagine).

Belongs to the glycosyl hydrolase 31 family. In terms of processing, the different forms of acid glucosidase are obtained by proteolytic processing. Phosphorylation of mannose residues ensures efficient transport of the enzyme to the lysosomes via the mannose 6-phosphate receptor.

Its subcellular location is the lysosome. It localises to the lysosome membrane. It carries out the reaction Hydrolysis of terminal, non-reducing (1-&gt;4)-linked alpha-D-glucose residues with release of alpha-D-glucose.. In terms of biological role, essential for the degradation of glycogen in lysosomes. Has highest activity on alpha-1,4-linked glycosidic linkages, but can also hydrolyze alpha-1,6-linked glucans. This is Lysosomal alpha-glucosidase (GAA) from Homo sapiens (Human).